Reading from the N-terminus, the 539-residue chain is MFFQGEGSIDIPVQDIISWIFDQARYEIEKPVYIDASNTSRSISWRQARTLVRQLAAGLRAAGLKDGDCVCLHSFNDIYYSILVLGIIAAGGIYMGTNPGYTSHELDYHLRVAQAKFVISDPEMLDRMIPAAEGNGIPKDRIWAFTTRESQVIATTGLAHWTALLNHGEADWRRLDDPNHAKTTVVARLFSSGTTGLPKPVDFTHYNIIAQHTLVYDAHPVPFETSRILSLPFFHAAAAPSAHFSALRLGDPSYVLRRFEPDLFLTTVAKHNITECTAVPPIILAILSHCTTPKYSNSLQSLKIVRCGAAPLDKTTQARFQSLLAPDATFTQVWGMTESSCIATMIPYPESDDTGSVGRLLPGMEAKIINTDGDDITAPDTTGEVCLRGPTVVRGYFNLPSANESAFDKDGFYRTGDLGYCDGKTRKWYLLDRKKDIIKVRGFQVAPAEVEGVLRNHPRIRDVAVVGVYDAEAKTEYPRAYVVRQDQSLQEEEVKEFVALRLAKYKRLDGGVRFVDAIPRNASGKILKRLLEDKRDEKL.

188-199 (RLFSSGTTGLPK) is an AMP binding site. The tract at residues 449 to 525 (EVEGVLRNHP…DAIPRNASGK (77 aa)) is AMP-binding.

The protein belongs to the ATP-dependent AMP-binding enzyme family.

It functions in the pathway secondary metabolite biosynthesis. Phenylacetyl-CoA ligase; part of the gene cluster that mediates the biosynthesis of nigerpyrone and its derivatives carbonarone A and pestalamide A. The biosynthesis pathway begins with the polyketide assembly by epaA to form phenylacetyl triketide precursor from successive condensation of two malonyl-CoA, presumably with one phenylacetyl-CoA starter unit produced by the phenylacetyl-CoA ligase epaB. For the nigerpyrone biosynthesis, the reactive polyketide chain is released as an aldehyde through the R-domain. A nonenzymatic cyclization and dehydration may create nigerpyrone. For the biosynthesis of carbonarone A and pestalamide A, an extra methyl group is added through the C-methyltransferase domain. Several further steps involving the dehydrogenase orf1, the cytochrome P450 monooxygenase orf2 and the FAD-dependent monooxygenase orf3 are required to form a carbonarone A precursor which is converted to carbonarone A via cyclization. The O-acetyltransferase epaC could catalyze the transfer of 2-methylsuccinyl-CoA, a common intermediate in the ethylmalonyl-CoA pathway, to generate the final product pestalamide A. This is Phenylacetyl-CoA ligase epaB from Aspergillus niger (strain ATCC MYA-4892 / CBS 513.88 / FGSC A1513).